The sequence spans 278 residues: Probable septum site-determining protein MinC (278 aa).

Positions Arg104 to Ser167 are disordered.

It belongs to the MinC family. In terms of assembly, interacts with MinD and FtsZ.

In terms of biological role, cell division inhibitor that blocks the formation of polar Z ring septums. Rapidly oscillates between the poles of the cell to destabilize FtsZ filaments that have formed before they mature into polar Z rings. Prevents FtsZ polymerization. This is Probable septum site-determining protein MinC from Bordetella avium (strain 197N).